The sequence spans 164 residues: tRNA (cytidine(34)-2'-O)-methyltransferase (164 aa).

Residues methionine 80, glycine 102, valine 124, and serine 132 each coordinate S-adenosyl-L-methionine.

Belongs to the class IV-like SAM-binding methyltransferase superfamily. RNA methyltransferase TrmH family. TrmL subfamily. As to quaternary structure, homodimer.

It localises to the cytoplasm. The enzyme catalyses cytidine(34) in tRNA + S-adenosyl-L-methionine = 2'-O-methylcytidine(34) in tRNA + S-adenosyl-L-homocysteine + H(+). It catalyses the reaction 5-carboxymethylaminomethyluridine(34) in tRNA(Leu) + S-adenosyl-L-methionine = 5-carboxymethylaminomethyl-2'-O-methyluridine(34) in tRNA(Leu) + S-adenosyl-L-homocysteine + H(+). Its function is as follows. Methylates the ribose at the nucleotide 34 wobble position in the two leucyl isoacceptors tRNA(Leu)(CmAA) and tRNA(Leu)(cmnm5UmAA). Catalyzes the methyl transfer from S-adenosyl-L-methionine to the 2'-OH of the wobble nucleotide. The sequence is that of tRNA (cytidine(34)-2'-O)-methyltransferase from Polaromonas sp. (strain JS666 / ATCC BAA-500).